Consider the following 1172-residue polypeptide: Serine/threonine-protein kinase Nek10 (1172 aa).

An ARM repeat occupies 209–251; that stretch reads GAHKTLVNLLGARDTNVLLGSLLALASLAESQECREKISELNI. Residues 481–514 adopt a coiled-coil conformation; that stretch reads YEELVSKLNLLVEDELKQIAENIESINQNKAPLK. The 194-residue stretch at 519 to 712 folds into the Protein kinase domain; that stretch reads YAILDHLGSG…SEPYGEKADV (194 aa). Residues 525–533 and K548 contribute to the ATP site; that span reads LGSGAFGCV. D655 acts as the Proton acceptor in catalysis. Disordered stretches follow at residues 855 to 875 and 898 to 954; these read SELSESADLPPEGFQASYGKD and TYSE…GSRP. Over residues 919-945 the composition is skewed to polar residues; that stretch reads PLKESTFNILKRSFSASGGERQSQTRD.

The protein belongs to the protein kinase superfamily. NEK Ser/Thr protein kinase family. NIMA subfamily. In terms of assembly, interacts with RAF1 and MAP2K1; the interaction is direct with RAF1 and required for ERK1/2-signaling pathway activation in response to UV irradiation. Mg(2+) is required as a cofactor. In terms of tissue distribution, expressed in the lung.

The catalysed reaction is L-seryl-[protein] + ATP = O-phospho-L-seryl-[protein] + ADP + H(+). The enzyme catalyses L-threonyl-[protein] + ATP = O-phospho-L-threonyl-[protein] + ADP + H(+). Functionally, plays a role in the cellular response to UV irradiation. Mediates G2/M cell cycle arrest, MEK autoactivation and ERK1/2-signaling pathway activation in response to UV irradiation. In ciliated cells of airways, it is involved in the regulation of mucociliary transport. The sequence is that of Serine/threonine-protein kinase Nek10 from Homo sapiens (Human).